The primary structure comprises 956 residues: uncharacterized protein (956 aa).

A Fibronectin type-III domain is found at Pro40 to Ala141. 2 disordered regions span residues Arg152 to Leu173 and Asn488 to His600. 2 stretches are compositionally biased toward polar residues: residues Asn153–Asn165 and Asn488–Gly523. The residue at position 154 (Thr154) is a Phosphothreonine. Phosphoserine occurs at positions 501 and 520. Low complexity predominate over residues Ser524 to Ala543. The segment covering Val552–Pro563 has biased composition (polar residues). Residues Ser564–Asp574 are compositionally biased toward low complexity. A compositionally biased stretch (polar residues) spans Arg578–Ser599. Ser802, Ser842, and Ser895 each carry phosphoserine. Residues Val875 to Ser956 are disordered. A compositionally biased stretch (low complexity) spans Ser895–Ser904.

This is an uncharacterized protein from Saccharomyces cerevisiae (strain ATCC 204508 / S288c) (Baker's yeast).